Consider the following 458-residue polypeptide: ATP synthase subunit beta (458 aa).

Residue G148–T155 coordinates ATP.

The protein belongs to the ATPase alpha/beta chains family. F-type ATPases have 2 components, CF(1) - the catalytic core - and CF(0) - the membrane proton channel. CF(1) has five subunits: alpha(3), beta(3), gamma(1), delta(1), epsilon(1). CF(0) has three main subunits: a(1), b(2) and c(9-12). The alpha and beta chains form an alternating ring which encloses part of the gamma chain. CF(1) is attached to CF(0) by a central stalk formed by the gamma and epsilon chains, while a peripheral stalk is formed by the delta and b chains.

The protein resides in the cell inner membrane. The catalysed reaction is ATP + H2O + 4 H(+)(in) = ADP + phosphate + 5 H(+)(out). Produces ATP from ADP in the presence of a proton gradient across the membrane. The catalytic sites are hosted primarily by the beta subunits. This is ATP synthase subunit beta from Shewanella piezotolerans (strain WP3 / JCM 13877).